Consider the following 261-residue polypeptide: Cytochrome c oxidase subunit 3 (261 aa).

The next 6 helical transmembrane spans lie at 31 to 51 (LVLWFHTGNIILLFTGLLLLI), 82 to 102 (PMILFITSEVCFFFAFFWAFF), 126 to 146 (PFLVPLLNTAVLLSSGVTITW), 159 to 179 (AIQALFLTVVLGIYFTILQAW), 197 to 217 (FFVATGFHGLHVIIGTTFLLV), and 239 to 259 (AWYWHFVDVVWLFLYVCIYWW).

It belongs to the cytochrome c oxidase subunit 3 family. As to quaternary structure, component of the cytochrome c oxidase (complex IV, CIV), a multisubunit enzyme composed of a catalytic core of 3 subunits and several supernumerary subunits. The complex exists as a monomer or a dimer and forms supercomplexes (SCs) in the inner mitochondrial membrane with ubiquinol-cytochrome c oxidoreductase (cytochrome b-c1 complex, complex III, CIII).

It is found in the mitochondrion inner membrane. The catalysed reaction is 4 Fe(II)-[cytochrome c] + O2 + 8 H(+)(in) = 4 Fe(III)-[cytochrome c] + 2 H2O + 4 H(+)(out). Component of the cytochrome c oxidase, the last enzyme in the mitochondrial electron transport chain which drives oxidative phosphorylation. The respiratory chain contains 3 multisubunit complexes succinate dehydrogenase (complex II, CII), ubiquinol-cytochrome c oxidoreductase (cytochrome b-c1 complex, complex III, CIII) and cytochrome c oxidase (complex IV, CIV), that cooperate to transfer electrons derived from NADH and succinate to molecular oxygen, creating an electrochemical gradient over the inner membrane that drives transmembrane transport and the ATP synthase. Cytochrome c oxidase is the component of the respiratory chain that catalyzes the reduction of oxygen to water. Electrons originating from reduced cytochrome c in the intermembrane space (IMS) are transferred via the dinuclear copper A center (CU(A)) of subunit 2 and heme A of subunit 1 to the active site in subunit 1, a binuclear center (BNC) formed by heme A3 and copper B (CU(B)). The BNC reduces molecular oxygen to 2 water molecules using 4 electrons from cytochrome c in the IMS and 4 protons from the mitochondrial matrix. This chain is Cytochrome c oxidase subunit 3 (COIII), found in Paracentrotus lividus (Common sea urchin).